An 88-amino-acid chain; its full sequence is Putative regulatory protein PCC7424_3427 (88 aa).

It belongs to the RemA family.

This Gloeothece citriformis (strain PCC 7424) (Cyanothece sp. (strain PCC 7424)) protein is Putative regulatory protein PCC7424_3427.